Reading from the N-terminus, the 401-residue chain is 4-hydroxy-3-methylbut-2-enyl diphosphate reductase (401 aa).

Cys-66 is a [4Fe-4S] cluster binding site. His-96 is a binding site for (2E)-4-hydroxy-3-methylbut-2-enyl diphosphate. His-96 provides a ligand contact to dimethylallyl diphosphate. An isopentenyl diphosphate-binding site is contributed by His-96. Cys-157 contacts [4Fe-4S] cluster. His-185 contributes to the (2E)-4-hydroxy-3-methylbut-2-enyl diphosphate binding site. Residue His-185 coordinates dimethylallyl diphosphate. Isopentenyl diphosphate is bound at residue His-185. Residue Glu-187 is the Proton donor of the active site. Thr-250 serves as a coordination point for (2E)-4-hydroxy-3-methylbut-2-enyl diphosphate. [4Fe-4S] cluster is bound at residue Cys-288. (2E)-4-hydroxy-3-methylbut-2-enyl diphosphate contacts are provided by Ser-317, Ser-318, Asn-319, and Ser-379. Dimethylallyl diphosphate is bound by residues Ser-317, Ser-318, Asn-319, and Ser-379. Isopentenyl diphosphate contacts are provided by Ser-317, Ser-318, Asn-319, and Ser-379.

Belongs to the IspH family. Requires [4Fe-4S] cluster as cofactor.

It catalyses the reaction isopentenyl diphosphate + 2 oxidized [2Fe-2S]-[ferredoxin] + H2O = (2E)-4-hydroxy-3-methylbut-2-enyl diphosphate + 2 reduced [2Fe-2S]-[ferredoxin] + 2 H(+). It carries out the reaction dimethylallyl diphosphate + 2 oxidized [2Fe-2S]-[ferredoxin] + H2O = (2E)-4-hydroxy-3-methylbut-2-enyl diphosphate + 2 reduced [2Fe-2S]-[ferredoxin] + 2 H(+). Its pathway is isoprenoid biosynthesis; dimethylallyl diphosphate biosynthesis; dimethylallyl diphosphate from (2E)-4-hydroxy-3-methylbutenyl diphosphate: step 1/1. It functions in the pathway isoprenoid biosynthesis; isopentenyl diphosphate biosynthesis via DXP pathway; isopentenyl diphosphate from 1-deoxy-D-xylulose 5-phosphate: step 6/6. Its function is as follows. Catalyzes the conversion of 1-hydroxy-2-methyl-2-(E)-butenyl 4-diphosphate (HMBPP) into a mixture of isopentenyl diphosphate (IPP) and dimethylallyl diphosphate (DMAPP). Acts in the terminal step of the DOXP/MEP pathway for isoprenoid precursor biosynthesis. In Trichodesmium erythraeum (strain IMS101), this protein is 4-hydroxy-3-methylbut-2-enyl diphosphate reductase.